A 359-amino-acid polypeptide reads, in one-letter code: 3-dehydroshikimate dehydratase (359 aa).

Belongs to the bacterial two-domain DSD family. As to quaternary structure, monomer.

It carries out the reaction 3-dehydroshikimate = 3,4-dihydroxybenzoate + H2O. It functions in the pathway aromatic compound metabolism; 3,4-dihydroxybenzoate biosynthesis; 3,4-dihydroxybenzoate from 3-dehydroquinate: step 2/2. Divalent cations such as Mg(2+), but also MO(2+), Mn(2+), Ba(2+), and Co(2+) activate the enzyme, whereas monovalent cations as K(+), Na(+), and NH4(+) decrease its activity slightly. 3-dehydroshikimate dehydratase; part of the qa gene cluster that mediates the catabolism of quinic acid (QA) and as such, allows the use of QA as a sole carbon source. Catalyzes the third reaction in the inducible quinic acid catabolic pathway by converting dehydroshikimate to protocatechuate. The qa cluster encodes 3 inducible enymes (qa-2, qa-3 and qa-4) catalyzing the first three reactions in the catabolism of quinic acid to protocatechuic acid (also known as 3,4-Dihydroxybenzoic acid). The sequence is that of 3-dehydroshikimate dehydratase from Neurospora crassa (strain ATCC 24698 / 74-OR23-1A / CBS 708.71 / DSM 1257 / FGSC 987).